The chain runs to 392 residues: Succinate--CoA ligase [ADP-forming] subunit beta (392 aa).

Residues 9–236 (RDLFERHGLP…QAAVDPLEQA (228 aa)) enclose the ATP-grasp domain. ATP-binding positions include K45, 52 to 54 (GRG), A94, and E99. Mg(2+) is bound by residues N191 and D205. Residues N256 and 318-320 (GIT) contribute to the substrate site.

This sequence belongs to the succinate/malate CoA ligase beta subunit family. As to quaternary structure, heterotetramer of two alpha and two beta subunits. The cofactor is Mg(2+).

It carries out the reaction succinate + ATP + CoA = succinyl-CoA + ADP + phosphate. The enzyme catalyses GTP + succinate + CoA = succinyl-CoA + GDP + phosphate. It functions in the pathway carbohydrate metabolism; tricarboxylic acid cycle; succinate from succinyl-CoA (ligase route): step 1/1. Its function is as follows. Succinyl-CoA synthetase functions in the citric acid cycle (TCA), coupling the hydrolysis of succinyl-CoA to the synthesis of either ATP or GTP and thus represents the only step of substrate-level phosphorylation in the TCA. The beta subunit provides nucleotide specificity of the enzyme and binds the substrate succinate, while the binding sites for coenzyme A and phosphate are found in the alpha subunit. This is Succinate--CoA ligase [ADP-forming] subunit beta from Salinispora tropica (strain ATCC BAA-916 / DSM 44818 / JCM 13857 / NBRC 105044 / CNB-440).